The chain runs to 533 residues: CTP synthase (533 aa).

The interval 1–269 is amidoligase domain; that stretch reads MKKNLKILVI…HEILSSKLNI (269 aa). Ser16 is a binding site for CTP. Ser16 contributes to the UTP binding site. ATP is bound by residues 17–22 and Asp73; that span reads GIGKGV. 2 residues coordinate Mg(2+): Asp73 and Glu143. CTP is bound by residues 150 to 152, 190 to 195, and Lys226; these read DME and KSKPTQ. Residues 190–195 and Lys226 each bind UTP; that span reads KSKPTQ. In terms of domain architecture, Glutamine amidotransferase type-1 spans 304 to 533; it reads YAELDDSYAS…LFLGLIKACI (230 aa). Gly355 contributes to the L-glutamine binding site. The active-site Nucleophile; for glutamine hydrolysis is the Cys382. L-glutamine is bound by residues 383–386, Glu406, and Arg466; that span reads LGLQ. Residues His511 and Glu513 contribute to the active site.

This sequence belongs to the CTP synthase family. Homotetramer.

The catalysed reaction is UTP + L-glutamine + ATP + H2O = CTP + L-glutamate + ADP + phosphate + 2 H(+). It catalyses the reaction L-glutamine + H2O = L-glutamate + NH4(+). It carries out the reaction UTP + NH4(+) + ATP = CTP + ADP + phosphate + 2 H(+). Its pathway is pyrimidine metabolism; CTP biosynthesis via de novo pathway; CTP from UDP: step 2/2. Allosterically activated by GTP, when glutamine is the substrate; GTP has no effect on the reaction when ammonia is the substrate. The allosteric effector GTP functions by stabilizing the protein conformation that binds the tetrahedral intermediate(s) formed during glutamine hydrolysis. Inhibited by the product CTP, via allosteric rather than competitive inhibition. Its function is as follows. Catalyzes the ATP-dependent amination of UTP to CTP with either L-glutamine or ammonia as the source of nitrogen. Regulates intracellular CTP levels through interactions with the four ribonucleotide triphosphates. The polypeptide is CTP synthase (Borreliella burgdorferi (strain ATCC 35210 / DSM 4680 / CIP 102532 / B31) (Borrelia burgdorferi)).